The primary structure comprises 393 residues: Adaptive-response sensory kinase SasA (393 aa).

The 223-residue stretch at methionine 171–arginine 393 folds into the Histidine kinase domain. Histidine 174 carries the post-translational modification Phosphohistidine; by autocatalysis.

In terms of assembly, homooligomerizes. Interacts with KaiC. Participates in the KaiABC clock complex, whose core is composed of a KaiC homohexamer, 6 KaiB and up to 6 KaiA dimers. SasA and KaiB(fs) compete to bind to KaiC.

It catalyses the reaction ATP + protein L-histidine = ADP + protein N-phospho-L-histidine.. Functionally, member of the two-component regulatory system SasA/RpaA involved in genome-wide circadian gene expression. One of several clock output pathways. Participates in the Kai clock protein complex, the main circadian regulator in cyanobacteria, via its interaction with KaiC. KaiC enhances the autophosphorylation activity of SasA, which then transfers its phosphate group to RpaA to activate it. In addition to its output function, recruits fold-shifted KaiB (KaiB(fs)) to KaiC to cooperatively form the KaiB(6):KaiC(6) complex (independent of SasA kinase activity). Required for robustness of the circadian rhythm of gene expression and is involved in clock output, also required for adaptation to light/dark cycles. This Gloeothece citriformis (strain PCC 7424) (Cyanothece sp. (strain PCC 7424)) protein is Adaptive-response sensory kinase SasA.